We begin with the raw amino-acid sequence, 255 residues long: Membrane protein insertase YidC 2 (255 aa).

Positions 1–20 are cleaved as a signal peptide; it reads MKKKLGLLAMVVALMAITAG. A lipid anchor (N-palmitoyl cysteine) is attached at Cys21. The S-diacylglycerol cysteine moiety is linked to residue Cys21. A run of 5 helical transmembrane segments spans residues 59–79, 129–149, 160–180, 202–222, and 223–243; these read YGLA…PLMI, LAGC…YHAI, FLWF…VAAI, MMLW…PAAL, and SLYW…IKGP.

The protein belongs to the OXA1/ALB3/YidC family. Type 2 subfamily.

It is found in the cell membrane. In terms of biological role, required for the insertion and/or proper folding and/or complex formation of integral membrane proteins into the membrane. Involved in integration of membrane proteins that insert both dependently and independently of the Sec translocase complex, as well as at least some lipoproteins. This Bacillus anthracis protein is Membrane protein insertase YidC 2.